Reading from the N-terminus, the 539-residue chain is Trigger factor (539 aa).

The 90-residue stretch at 163 to 252 (GDQLTVQIET…VLDVQERLLP (90 aa)) folds into the PPIase FKBP-type domain. Low complexity-rich tracts occupy residues 434–447 (SFEQ…ASEP) and 475–484 (AASPEAASEP). The disordered stretch occupies residues 434–539 (SFEQAASPEA…DVATPEARTE (106 aa)). The segment covering 509 to 528 (TETPIVSQEENGESVENQSV) has biased composition (polar residues).

Belongs to the FKBP-type PPIase family. Tig subfamily.

It is found in the cytoplasm. The enzyme catalyses [protein]-peptidylproline (omega=180) = [protein]-peptidylproline (omega=0). Involved in protein export. Acts as a chaperone by maintaining the newly synthesized protein in an open conformation. Functions as a peptidyl-prolyl cis-trans isomerase. In Roseiflexus sp. (strain RS-1), this protein is Trigger factor.